Reading from the N-terminus, the 197-residue chain is Probable inosine/xanthosine triphosphatase (197 aa).

9 to 14 (TSNPIK) is a binding site for substrate. The Mg(2+) site is built by Asp-36 and Asp-65.

The protein belongs to the YjjX NTPase family. As to quaternary structure, homodimer. Requires Mg(2+) as cofactor. It depends on Mn(2+) as a cofactor.

It carries out the reaction XTP + H2O = XDP + phosphate + H(+). The catalysed reaction is ITP + H2O = IDP + phosphate + H(+). In terms of biological role, phosphatase that hydrolyzes non-canonical purine nucleotides such as XTP and ITP to their respective diphosphate derivatives. Probably excludes non-canonical purines from DNA/RNA precursor pool, thus preventing their incorporation into DNA/RNA and avoiding chromosomal lesions. The chain is Probable inosine/xanthosine triphosphatase from Aeropyrum pernix (strain ATCC 700893 / DSM 11879 / JCM 9820 / NBRC 100138 / K1).